Reading from the N-terminus, the 301-residue chain is Putative dynamin-related protein 4A (301 aa).

Positions 59-301 (GIQLPTIVVV…LIDGDIVGIL (243 aa)) constitute a Dynamin-type G domain. Positions 69–76 (GDQSSGKS) are G1 motif. 69 to 76 (GDQSSGKS) contributes to the GTP binding site. The interval 94–96 (CTR) is G2 motif. A G3 motif region spans residues 168 to 171 (DLPG). GTP contacts are provided by residues 168-172 (DLPGI) and 237-240 (TKAD). The tract at residues 237-240 (TKAD) is G4 motif. Position 270 (glutamate 270) is a region of interest, G5 motif.

It belongs to the TRAFAC class dynamin-like GTPase superfamily. Dynamin/Fzo/YdjA family.

The polypeptide is Putative dynamin-related protein 4A (DRP4A) (Arabidopsis thaliana (Mouse-ear cress)).